A 144-amino-acid polypeptide reads, in one-letter code: Large ribosomal subunit protein uL13 (144 aa).

It belongs to the universal ribosomal protein uL13 family. Part of the 50S ribosomal subunit.

Functionally, this protein is one of the early assembly proteins of the 50S ribosomal subunit, although it is not seen to bind rRNA by itself. It is important during the early stages of 50S assembly. The protein is Large ribosomal subunit protein uL13 of Clostridium botulinum (strain ATCC 19397 / Type A).